The sequence spans 146 residues: Hemoglobin subunit beta (146 aa).

The residue at position 1 (Val-1) is an N-acetylvaline. Residues 2–146 (HLTGEEKSAV…VANALAHKYH (145 aa)) enclose the Globin domain. A Phosphothreonine modification is found at Thr-12. Ser-44 carries the post-translational modification Phosphoserine. Residue Lys-59 is modified to N6-acetyllysine. His-63 contacts heme b. N6-acetyllysine is present on Lys-82. His-92 lines the heme b pocket. Residue Cys-93 is modified to S-nitrosocysteine. Residue Lys-144 is modified to N6-acetyllysine.

The protein belongs to the globin family. As to quaternary structure, heterotetramer of two alpha chains and two beta chains. As to expression, red blood cells.

In terms of biological role, involved in oxygen transport from the lung to the various peripheral tissues. The polypeptide is Hemoglobin subunit beta (HBB) (Mico argentatus (Silvery marmoset)).